The following is a 420-amino-acid chain: Gamma-glutamyl phosphate reductase (420 aa).

The protein belongs to the gamma-glutamyl phosphate reductase family.

The protein resides in the cytoplasm. It carries out the reaction L-glutamate 5-semialdehyde + phosphate + NADP(+) = L-glutamyl 5-phosphate + NADPH + H(+). The protein operates within amino-acid biosynthesis; L-proline biosynthesis; L-glutamate 5-semialdehyde from L-glutamate: step 2/2. Functionally, catalyzes the NADPH-dependent reduction of L-glutamate 5-phosphate into L-glutamate 5-semialdehyde and phosphate. The product spontaneously undergoes cyclization to form 1-pyrroline-5-carboxylate. The polypeptide is Gamma-glutamyl phosphate reductase (Streptococcus pneumoniae (strain Hungary19A-6)).